A 350-amino-acid polypeptide reads, in one-letter code: L-serine dehydratase (350 aa).

Position 62 is an N6-(pyridoxal phosphate)lysine (Lys-62).

Belongs to the serine/threonine dehydratase family. Pyridoxal 5'-phosphate is required as a cofactor.

Its subcellular location is the cytoplasm. It carries out the reaction L-serine = pyruvate + NH4(+). It participates in carbohydrate biosynthesis; gluconeogenesis. The chain is L-serine dehydratase (sds) from Dictyostelium discoideum (Social amoeba).